We begin with the raw amino-acid sequence, 251 residues long: Cell division protein ZapD (251 aa).

The protein belongs to the ZapD family. Interacts with FtsZ.

The protein resides in the cytoplasm. In terms of biological role, cell division factor that enhances FtsZ-ring assembly. Directly interacts with FtsZ and promotes bundling of FtsZ protofilaments, with a reduction in FtsZ GTPase activity. The chain is Cell division protein ZapD from Burkholderia thailandensis (strain ATCC 700388 / DSM 13276 / CCUG 48851 / CIP 106301 / E264).